The chain runs to 538 residues: indole-2-monooxygenase (538 aa).

A helical transmembrane segment spans residues 22-42; it reads ALLLAIPFSLLLLPLLLRYLA. Cys-481 contributes to the heme binding site.

The protein belongs to the cytochrome P450 family. Requires heme as cofactor.

The protein resides in the membrane. It catalyses the reaction indole + reduced [NADPH--hemoprotein reductase] + O2 = indolin-2-one + oxidized [NADPH--hemoprotein reductase] + H2O + H(+). It functions in the pathway secondary metabolite biosynthesis; 2,4-dihydroxy-1,4-benzoxazin-3-one biosynthesis; 2,4-dihydroxy-1,4-benzoxazin-3-one from indoleglycerol phosphate: step 2/5. Catalyzes the conversion of indole to indolin-2-one. In Zea mays (Maize), this protein is indole-2-monooxygenase (CYP71C4).